A 283-amino-acid polypeptide reads, in one-letter code: Cytosolic Fe-S cluster assembly factor CFD1 (283 aa).

26–33 is an ATP binding site; sequence GKGGVGKS. [4Fe-4S] cluster is bound by residues cysteine 202 and cysteine 205.

The protein belongs to the Mrp/NBP35 ATP-binding proteins family. NUBP2/CFD1 subfamily. Heterotetramer of 2 NBP35 and 2 CFD1 chains. It depends on [4Fe-4S] cluster as a cofactor.

The protein resides in the cytoplasm. Component of the cytosolic iron-sulfur (Fe/S) protein assembly (CIA) machinery. Required for maturation of extramitochondrial Fe-S proteins. The NBP35-CFD1 heterotetramer forms a Fe-S scaffold complex, mediating the de novo assembly of an Fe-S cluster and its transfer to target apoproteins. Required for biogenesis and export of both ribosomal subunits, which may reflect a role in assembly of the Fe/S clusters in RLI1, a protein which performs rRNA processing and ribosome export. This chain is Cytosolic Fe-S cluster assembly factor CFD1, found in Kluyveromyces lactis (strain ATCC 8585 / CBS 2359 / DSM 70799 / NBRC 1267 / NRRL Y-1140 / WM37) (Yeast).